Here is a 565-residue protein sequence, read N- to C-terminus: UV-stimulated scaffold protein A homolog (565 aa).

The segment at 11–156 is VHS-like; it reads RKNLNRILQE…VTLRKTKFVD (146 aa). A coiled-coil region spans residues 155-215; the sequence is VDYENGEKKI…ELETTMEMLV (61 aa). Residues 441–468 form a UVSSA-type zinc finger; it reads DRECLAKLPSGALCKRKDMFKCPLHGPL. Zn(2+)-binding residues include C444, C454, C462, and H465. The stretch at 480 to 510 forms a coiled coil; it reads DEDRLKEIDRKERKRLKEAEEFSRKIVKEYE. 2 disordered regions span residues 510-530 and 542-565; these read ESKT…SRLQ and VSAD…FSHL.

The protein belongs to the UVSSA family.

The protein localises to the chromosome. In terms of biological role, factor involved in transcription-coupled nucleotide excision repair (TC-NER) in response to UV damage. TC-NER allows RNA polymerase II-blocking lesions to be rapidly removed from the transcribed strand of active genes. The chain is UV-stimulated scaffold protein A homolog from Caenorhabditis briggsae.